A 229-amino-acid polypeptide reads, in one-letter code: Small ribosomal subunit protein uS5 (229 aa).

Residues 61-124 (LEEQVLDVKL…AHAKLSLIKV (64 aa)) enclose the S5 DRBM domain.

The protein belongs to the universal ribosomal protein uS5 family. As to quaternary structure, part of the 30S ribosomal subunit. Contacts protein S4.

Functionally, with S4 and S12 plays an important role in translational accuracy. The chain is Small ribosomal subunit protein uS5 from Methanococcus maripaludis (strain C6 / ATCC BAA-1332).